The primary structure comprises 747 residues: MFDTCGPKGVKSQVISGQRENFVRLDSMDSRYSQSSETGLNKCTLNIQGGPKRFAQGSKASSGSFKKGFRKGSEGLWSIGRSIGLGVSRAVFPEDLEVSEKKIFDPQDKFLLLCNKLFVASCILAVSVDPLFLYLPFINDKAKCVGIDRKLAIIVTTIRTVIDSFYLFHMALRFRTAYVAPSSRVFGRGELVIDPAQIAKRYLQQYFIIDLLSVLPVPQIIVWRFLYTSRGANVLATKQALRYIVLVQYIPRFLRMYPLSSELKRTAGVFAETAWAGAAYYLLLYMLASHIVGALWYLLALERNNDCWSKACHNNQNCTRNFLFCGNQNMKGYAAWDNIKVSYLQLKCPVNVPEDEEPPFDFGIYLRALSSGIVSSKNFVSKYFFCLWWGLQNLSTLGQGLETSTYPGEVIFSITLAIAGLLLFALLIGNMQTYLQSLTIRLEEMRVKRRDSEQWMHHRMLPPELRERVRRYDQYKWLETRGVDEENLVQNLPKDLRRDIKRHLCLALVRRVPLFENMDERLLDAICERLKPCLFTEKSYLVREGDPVNEMLFIIRGRLESVTTDGGRSGFYNRSLLKEGDFCGDELLTWALDPKSGSNLPSSTRTVKALTEVEAFALIADELKFVASQFRRLHSRQVQHTFRFYSQQWRTWAACFMQAAWRRYIKRKKLEQLRKEEEEEEAAAASVIAGGSPYSIRATFLASKFAANALRSVHKNRTAKSTLLLSSTKELVKFQKPPEPDFSAEDH.

Topologically, residues 1-117 are cytoplasmic; that stretch reads MFDTCGPKGV…DKFLLLCNKL (117 aa). The chain crosses the membrane as a helical span at residues 118–138; sequence FVASCILAVSVDPLFLYLPFI. The Extracellular portion of the chain corresponds to 139–150; it reads NDKAKCVGIDRK. The helical transmembrane segment at 151-171 threads the bilayer; the sequence is LAIIVTTIRTVIDSFYLFHMA. The Cytoplasmic segment spans residues 172–205; that stretch reads LRFRTAYVAPSSRVFGRGELVIDPAQIAKRYLQQ. The helical transmembrane segment at 206-226 threads the bilayer; that stretch reads YFIIDLLSVLPVPQIIVWRFL. Residues 227-239 are Extracellular-facing; it reads YTSRGANVLATKQ. A helical transmembrane segment spans residues 240–260; the sequence is ALRYIVLVQYIPRFLRMYPLS. At 261 to 280 the chain is on the cytoplasmic side; sequence SELKRTAGVFAETAWAGAAY. A helical transmembrane segment spans residues 281–301; sequence YLLLYMLASHIVGALWYLLAL. Over 302–407 the chain is Extracellular; that stretch reads ERNNDCWSKA…GQGLETSTYP (106 aa). Residues 408–428 form a helical membrane-spanning segment; the sequence is GEVIFSITLAIAGLLLFALLI. Topologically, residues 429 to 747 are cytoplasmic; sequence GNMQTYLQSL…PEPDFSAEDH (319 aa). A nucleoside 3',5'-cyclic phosphate contacts are provided by residues 514–638 and Asp-585; that span reads LFEN…SRQV. The calmodulin-binding stretch occupies residues 630-645; it reads FRRLHSRQVQHTFRFY. An IQ domain is found at 650–679; that stretch reads RTWAACFMQAAWRRYIKRKKLEQLRKEEEE.

Belongs to the cyclic nucleotide-gated cation channel (TC 1.A.1.5) family. As to quaternary structure, homotetramer or heterotetramer.

It localises to the cell membrane. Its function is as follows. Probable cyclic nucleotide-gated ion channel. The sequence is that of Probable cyclic nucleotide-gated ion channel 6 (CNGC6) from Arabidopsis thaliana (Mouse-ear cress).